A 336-amino-acid chain; its full sequence is Protein-glutamate methylesterase/protein-glutamine glutaminase 3 (336 aa).

Residues Lys2 to Leu119 enclose the Response regulatory domain. Asp53 is subject to 4-aspartylphosphate. The 190-residue stretch at Val147 to Gln336 folds into the CheB-type methylesterase domain. Catalysis depends on residues Ser159, His186, and Asp279.

This sequence belongs to the CheB family. Phosphorylated by CheA. Phosphorylation of the N-terminal regulatory domain activates the methylesterase activity.

The protein resides in the cytoplasm. It carries out the reaction [protein]-L-glutamate 5-O-methyl ester + H2O = L-glutamyl-[protein] + methanol + H(+). The catalysed reaction is L-glutaminyl-[protein] + H2O = L-glutamyl-[protein] + NH4(+). In terms of biological role, involved in chemotaxis. Part of a chemotaxis signal transduction system that modulates chemotaxis in response to various stimuli. Catalyzes the demethylation of specific methylglutamate residues introduced into the chemoreceptors (methyl-accepting chemotaxis proteins or MCP) by CheR. Also mediates the irreversible deamidation of specific glutamine residues to glutamic acid. The polypeptide is Protein-glutamate methylesterase/protein-glutamine glutaminase 3 (Pseudomonas syringae pv. tomato (strain ATCC BAA-871 / DC3000)).